Here is a 462-residue protein sequence, read N- to C-terminus: Asparagine--tRNA ligase (462 aa).

Belongs to the class-II aminoacyl-tRNA synthetase family. As to quaternary structure, homodimer.

The protein localises to the cytoplasm. It carries out the reaction tRNA(Asn) + L-asparagine + ATP = L-asparaginyl-tRNA(Asn) + AMP + diphosphate + H(+). This Borreliella burgdorferi (strain ATCC 35210 / DSM 4680 / CIP 102532 / B31) (Borrelia burgdorferi) protein is Asparagine--tRNA ligase.